The primary structure comprises 116 residues: MRHQRRIPQLSLPADQRKALLRGLTTQLIREGRVTTTKARAKALRNETERMITLAKDGSLASRRRAIGYVYDKQLVHALFEKAQERYGDREGGYTRIVRTTPRRGDNSEMAIVELV.

The protein belongs to the bacterial ribosomal protein bL17 family. As to quaternary structure, part of the 50S ribosomal subunit. Contacts protein L32.

The chain is Large ribosomal subunit protein bL17 from Prochlorococcus marinus (strain NATL2A).